A 525-amino-acid chain; its full sequence is GMP synthase [glutamine-hydrolyzing] (525 aa).

Residues 13-202 (TILVLDFGSQ…AVDLCHAKQN (190 aa)) enclose the Glutamine amidotransferase type-1 domain. The active-site Nucleophile is cysteine 89. Residues histidine 176 and glutamate 178 contribute to the active site. A GMPS ATP-PPase domain is found at 203 to 400 (WTMKNFIGTE…LGISHELVWR (198 aa)). 231-237 (SGGVDST) is an ATP binding site. The XMP site is built by arginine 304, aspartate 462, lysine 517, and glutamate 523.

In terms of assembly, homodimer. It depends on Mg(2+) as a cofactor.

The protein resides in the cytoplasm. It is found in the cytosol. The catalysed reaction is XMP + L-glutamine + ATP + H2O = GMP + L-glutamate + AMP + diphosphate + 2 H(+). It functions in the pathway purine metabolism; GMP biosynthesis; GMP from XMP (L-Gln route): step 1/1. In terms of biological role, catalyzes the conversion of xanthine monophosphate (XMP) to GMP in the presence of glutamine and ATP through an adenyl-XMP intermediate. In Candida glabrata (strain ATCC 2001 / BCRC 20586 / JCM 3761 / NBRC 0622 / NRRL Y-65 / CBS 138) (Yeast), this protein is GMP synthase [glutamine-hydrolyzing] (GUA1).